We begin with the raw amino-acid sequence, 171 residues long: MAVCARLLEWIFFFYFFSHIPITLLVDLQAVLPPSLYPQELLDLMKWYTVAFKDHLMANPPPWFKSFVYCEAILQLPFFPVAAYAFFKGGCKWIRIPAIVYSAHVATTVIAIIGHILFGEFPKSDVIAPLTQKDRLTLVSIYAPYLLVPVLLLLTMLFSPRYRQEEKRKRK.

The Cytoplasmic portion of the chain corresponds to 1–6 (MAVCAR). A helical transmembrane segment spans residues 7-27 (LLEWIFFFYFFSHIPITLLVD). Residues 8–153 (LEWIFFFYFF…PYLLVPVLLL (146 aa)) enclose the EXPERA domain. Residues 28–66 (LQAVLPPSLYPQELLDLMKWYTVAFKDHLMANPPPWFKS) are Lumenal-facing. The helical transmembrane segment at 67-87 (FVYCEAILQLPFFPVAAYAFF) threads the bilayer. Residues isoleucine 73 and glutamine 75 each contribute to the cholesterol site. Residues 88–97 (KGGCKWIRIP) are Cytoplasmic-facing. A helical transmembrane segment spans residues 98–118 (AIVYSAHVATTVIAIIGHILF). The Lumenal segment spans residues 119-137 (GEFPKSDVIAPLTQKDRLT). Residues 138–158 (LVSIYAPYLLVPVLLLLTMLF) form a helical membrane-spanning segment. At 159–171 (SPRYRQEEKRKRK) the chain is on the cytoplasmic side. Positions 167–171 (KRKRK) match the ER retention motif motif.

It belongs to the TMEM97/sigma-2 receptor family. As to quaternary structure, homodimer.

It localises to the rough endoplasmic reticulum membrane. The protein resides in the nucleus membrane. In terms of biological role, sigma-2 receptor which contributes to ameliorate dysfunctional cellular processes and slow degenerative progression by regulating cell functions including cholesterol biosynthesis/trafficking, membrane trafficking, autophagy, lipid membrane-bound protein trafficking, and receptor stabilization at the cell surface. Forms a ternary complex with PGRMC1 receptor and low density lipoprotein receptor/LDLR at the plasma membrane, which increases LDLR-mediated LDL cholesterol internalization. Decreases lysosomal sterol transporter NPC1 availability to the cell, probably through NPC1-binding, hence controlling lipid transport, including cholesterol and LBPA, outside of late endosome/lysosome. Binds regio- and stereoselective ligand 20(S)-hydroxycholesterol (20(S)-OHC), thereby linking OHC binding to cholesterol homeostasis. Also able to bind cholesterol. Binds histatin 1 (Hst 1)/HN1 salivary peptide at the ER membrane, which is critical for increasing mitochondria-ER contacts and stimulating Hst1 wound healing properties. May alter the activity of some cytochrome P450 proteins. Although shows homologies with sterol isomerases (EXPERA domain), not able to catalyze sterol isomerization. However, may act as sensors of these molecules. Acts as a quality control factor in the ER, promoting the proteolytic degradation of nonproductive and extramitochondrial precursor proteins in the ER membrane thus removing them from the ER surface. The protein is Sigma intracellular receptor 2 (tmem97) of Xenopus tropicalis (Western clawed frog).